The sequence spans 273 residues: Phosphonates import ATP-binding protein PhnC (273 aa).

Residues 2-245 (LRIDKLTKRF…VAREIYGADA (244 aa)) form the ABC transporter domain. ATP is bound at residue 34–41 (GRSGAGKS).

It belongs to the ABC transporter superfamily. Phosphonates importer (TC 3.A.1.9.1) family. As to quaternary structure, the complex is composed of two ATP-binding proteins (PhnC), two transmembrane proteins (PhnE) and a solute-binding protein (PhnD).

Its subcellular location is the cell inner membrane. It carries out the reaction phosphonate(out) + ATP + H2O = phosphonate(in) + ADP + phosphate + H(+). Its function is as follows. Part of the ABC transporter complex PhnCDE involved in phosphonates import. Responsible for energy coupling to the transport system. The chain is Phosphonates import ATP-binding protein PhnC from Ruegeria pomeroyi (strain ATCC 700808 / DSM 15171 / DSS-3) (Silicibacter pomeroyi).